Here is a 297-residue protein sequence, read N- to C-terminus: Manganese efflux system protein MneP (297 aa).

The next 6 membrane-spanning stretches (helical) occupy residues 12–32, 43–63, 85–105, 111–131, 155–175, and 177–197; these read VALI…FFGL, GIHS…IGIS, IVGI…ILSF, VPQY…EILY, GDIV…IGNS, and GWSY…YLIF.

This sequence belongs to the cation diffusion facilitator (CDF) transporter (TC 2.A.4) family.

It localises to the cell membrane. Functionally, primary efflux pump for manganese. May prevent manganese intoxication. This is Manganese efflux system protein MneP from Bacillus subtilis (strain 168).